The chain runs to 82 residues: Sec-independent protein translocase protein TatA (82 aa).

Residues Met1–Gly21 form a helical membrane-spanning segment. The disordered stretch occupies residues Val43–Asp82.

This sequence belongs to the TatA/E family. In terms of assembly, the Tat system comprises two distinct complexes: a TatABC complex, containing multiple copies of TatA, TatB and TatC subunits, and a separate TatA complex, containing only TatA subunits. Substrates initially bind to the TatABC complex, which probably triggers association of the separate TatA complex to form the active translocon.

The protein localises to the cell inner membrane. Functionally, part of the twin-arginine translocation (Tat) system that transports large folded proteins containing a characteristic twin-arginine motif in their signal peptide across membranes. TatA could form the protein-conducting channel of the Tat system. This Pseudomonas paraeruginosa (strain DSM 24068 / PA7) (Pseudomonas aeruginosa (strain PA7)) protein is Sec-independent protein translocase protein TatA.